A 278-amino-acid polypeptide reads, in one-letter code: Protein MGF 505-3R (278 aa).

Belongs to the asfivirus MGF 505 family.

Its function is as follows. Plays a role in virus cell tropism, and may be required for efficient virus replication in macrophages. The protein is Protein MGF 505-3R of African swine fever virus (isolate Tick/Malawi/Lil 20-1/1983) (ASFV).